A 68-amino-acid polypeptide reads, in one-letter code: P21 prophage-derived head-stabilizing protein (68 aa).

Belongs to the lambda phage gpW family.

The chain is P21 prophage-derived head-stabilizing protein from Escherichia coli O6:H1 (strain CFT073 / ATCC 700928 / UPEC).